The chain runs to 502 residues: Glycerol kinase (502 aa).

An ADP-binding site is contributed by threonine 13. Residues threonine 13, threonine 14, and serine 15 each coordinate ATP. A sn-glycerol 3-phosphate-binding site is contributed by threonine 13. Arginine 17 contacts ADP. Arginine 83, glutamate 84, tyrosine 136, and aspartate 246 together coordinate sn-glycerol 3-phosphate. The glycerol site is built by arginine 83, glutamate 84, tyrosine 136, aspartate 246, and glutamine 247. ADP is bound by residues threonine 268 and glycine 311. ATP is bound by residues threonine 268, glycine 311, glutamine 315, and glycine 412. 2 residues coordinate ADP: glycine 412 and asparagine 416.

The protein belongs to the FGGY kinase family.

The catalysed reaction is glycerol + ATP = sn-glycerol 3-phosphate + ADP + H(+). Its pathway is polyol metabolism; glycerol degradation via glycerol kinase pathway; sn-glycerol 3-phosphate from glycerol: step 1/1. Its activity is regulated as follows. Inhibited by fructose 1,6-bisphosphate (FBP). In terms of biological role, key enzyme in the regulation of glycerol uptake and metabolism. Catalyzes the phosphorylation of glycerol to yield sn-glycerol 3-phosphate. This Francisella tularensis subsp. tularensis (strain WY96-3418) protein is Glycerol kinase.